Consider the following 576-residue polypeptide: Arginine--tRNA ligase (576 aa).

The 'HIGH' region signature appears at 122–132 (PNVAKQMHVGH).

The protein belongs to the class-I aminoacyl-tRNA synthetase family. In terms of assembly, monomer.

Its subcellular location is the cytoplasm. It carries out the reaction tRNA(Arg) + L-arginine + ATP = L-arginyl-tRNA(Arg) + AMP + diphosphate. The polypeptide is Arginine--tRNA ligase (Proteus mirabilis (strain HI4320)).